The sequence spans 1601 residues: Ectopic P granules protein 5 (1601 aa).

The interval 1–109 (MAELVRPKKP…EAPPIPARNL (109 aa)) is disordered. Residues 15–26 (RPQSDDAPRIPD) are compositionally biased toward basic and acidic residues.

This sequence belongs to the EPG5 family.

It is found in the cytoplasm. In terms of biological role, involved in autophagy. Has a role in the degradation of protein aggregates within autophagosomes. Essential for starvation-induced autotrophy and omegasome development. The sequence is that of Ectopic P granules protein 5 (epg-5) from Caenorhabditis briggsae.